The chain runs to 894 residues: Bifunctional glutamine synthetase adenylyltransferase/adenylyl-removing enzyme (894 aa).

The segment at methionine 1–serine 410 is adenylyl removase. Residues serine 415 to serine 894 form an adenylyl transferase region.

The protein belongs to the GlnE family. It depends on Mg(2+) as a cofactor.

The enzyme catalyses [glutamine synthetase]-O(4)-(5'-adenylyl)-L-tyrosine + phosphate = [glutamine synthetase]-L-tyrosine + ADP. The catalysed reaction is [glutamine synthetase]-L-tyrosine + ATP = [glutamine synthetase]-O(4)-(5'-adenylyl)-L-tyrosine + diphosphate. Involved in the regulation of glutamine synthetase GlnA, a key enzyme in the process to assimilate ammonia. When cellular nitrogen levels are high, the C-terminal adenylyl transferase (AT) inactivates GlnA by covalent transfer of an adenylyl group from ATP to specific tyrosine residue of GlnA, thus reducing its activity. Conversely, when nitrogen levels are low, the N-terminal adenylyl removase (AR) activates GlnA by removing the adenylyl group by phosphorolysis, increasing its activity. The regulatory region of GlnE binds the signal transduction protein PII (GlnB) which indicates the nitrogen status of the cell. This is Bifunctional glutamine synthetase adenylyltransferase/adenylyl-removing enzyme from Chromobacterium violaceum (strain ATCC 12472 / DSM 30191 / JCM 1249 / CCUG 213 / NBRC 12614 / NCIMB 9131 / NCTC 9757 / MK).